The primary structure comprises 442 residues: ATP-dependent RNA helicase SUB2 (442 aa).

Residues 59-87 (TGFRDFLLKGELLRAITDCGFEHPSEVQQ) carry the Q motif motif. The Helicase ATP-binding domain occupies 90 to 265 (IPTAILNVDV…KKFMRNPLEV (176 aa)). 103–110 (AKSGLGKT) is a binding site for ATP. The DECD box signature appears at 212–215 (DECD). The Helicase C-terminal domain occupies 293 to 438 (KLNELLDSLE…EYPQGGVDSS (146 aa)).

Belongs to the DEAD box helicase family. DECD subfamily.

Its subcellular location is the nucleus. The catalysed reaction is ATP + H2O = ADP + phosphate + H(+). Its function is as follows. ATP-binding RNA helicase involved in transcription elongation and required for the export of mRNA out of the nucleus. SUB2 also plays a role in pre-mRNA splicing and spliceosome assembly. May be involved in rDNA and telomeric silencing, and maintenance of genome integrity. This is ATP-dependent RNA helicase SUB2 (SUB2) from Ajellomyces capsulatus (strain NAm1 / WU24) (Darling's disease fungus).